The primary structure comprises 500 residues: Probable malate:quinone oxidoreductase (500 aa).

This sequence belongs to the MQO family. The cofactor is FAD.

The enzyme catalyses (S)-malate + a quinone = a quinol + oxaloacetate. It participates in carbohydrate metabolism; tricarboxylic acid cycle; oxaloacetate from (S)-malate (quinone route): step 1/1. This Bacillus cereus (strain AH187) protein is Probable malate:quinone oxidoreductase.